The sequence spans 406 residues: Renin (406 aa).

The first 23 residues, 1–23 (MDGWRRMPRWGLLLLLWGSCTFG), serve as a signal peptide directing secretion. Positions 24–66 (LPTDTTTFKRIFLKRMPSIRESLKERGVDMARLGPEWSQPMKR) are cleaved as a propeptide — activation peptide. The N-linked (GlcNAc...) asparagine glycan is linked to Asn-71. One can recognise a Peptidase A1 domain in the interval 86–403 (YYGEIGIGTP…DRRNNRIGFA (318 aa)). Asp-104 is a catalytic residue. The cysteines at positions 117 and 124 are disulfide-linked. Asn-141 carries an N-linked (GlcNAc...) asparagine glycan. An intrachain disulfide couples Cys-283 to Cys-287. Residue Asp-292 is part of the active site. Cys-325 and Cys-362 are disulfide-bonded.

The protein belongs to the peptidase A1 family. Interacts with ATP6AP2.

The protein resides in the secreted. It is found in the membrane. The enzyme catalyses Cleavage of Leu-|-Xaa bond in angiotensinogen to generate angiotensin I.. With respect to regulation, interaction with ATP6AP2 results in a 5-fold increased efficiency in angiotensinogen processing. In terms of biological role, renin is a highly specific endopeptidase, whose only known function is to generate angiotensin I from angiotensinogen in the plasma, initiating a cascade of reactions that produce an elevation of blood pressure and increased sodium retention by the kidney. This chain is Renin (REN), found in Macaca fascicularis (Crab-eating macaque).